A 143-amino-acid chain; its full sequence is Large ribosomal subunit protein uL11 (143 aa).

The protein belongs to the universal ribosomal protein uL11 family. Part of the ribosomal stalk of the 50S ribosomal subunit. Interacts with L10 and the large rRNA to form the base of the stalk. L10 forms an elongated spine to which L12 dimers bind in a sequential fashion forming a multimeric L10(L12)X complex. In terms of processing, one or more lysine residues are methylated.

Its function is as follows. Forms part of the ribosomal stalk which helps the ribosome interact with GTP-bound translation factors. This is Large ribosomal subunit protein uL11 from Methylococcus capsulatus (strain ATCC 33009 / NCIMB 11132 / Bath).